A 175-amino-acid polypeptide reads, in one-letter code: MQTFILAGGCFWCLDAVYRTLDGVQDVISGYIGGHTAHPSYDAVCTGATGHAEAVKVVFDEEVIPADVILDVFFTLHDPRQLNRQGADVGTQYRSAMFPADAAQEQLFRDAISRAGELWDGTAVTTIEPVGTWYDAEDYHQDFFAKNPGQGYCNAVAVPKVNKVRKSFAQYVRAA.

Cys-10 is an active-site residue.

It belongs to the MsrA Met sulfoxide reductase family.

The enzyme catalyses L-methionyl-[protein] + [thioredoxin]-disulfide + H2O = L-methionyl-(S)-S-oxide-[protein] + [thioredoxin]-dithiol. It catalyses the reaction [thioredoxin]-disulfide + L-methionine + H2O = L-methionine (S)-S-oxide + [thioredoxin]-dithiol. In terms of biological role, has an important function as a repair enzyme for proteins that have been inactivated by oxidation. Catalyzes the reversible oxidation-reduction of methionine sulfoxide in proteins to methionine. The chain is Peptide methionine sulfoxide reductase MsrA from Clavibacter michiganensis subsp. michiganensis (strain NCPPB 382).